We begin with the raw amino-acid sequence, 155 residues long: Deoxyuridine 5'-triphosphate nucleotidohydrolase (155 aa).

Residues 74 to 76 (RSG), Asn-87, and 91 to 93 (TID) contribute to the substrate site.

Belongs to the dUTPase family. Requires Mg(2+) as cofactor.

It carries out the reaction dUTP + H2O = dUMP + diphosphate + H(+). Its pathway is pyrimidine metabolism; dUMP biosynthesis; dUMP from dCTP (dUTP route): step 2/2. Functionally, this enzyme is involved in nucleotide metabolism: it produces dUMP, the immediate precursor of thymidine nucleotides and it decreases the intracellular concentration of dUTP so that uracil cannot be incorporated into DNA. The chain is Deoxyuridine 5'-triphosphate nucleotidohydrolase from Cereibacter sphaeroides (strain KD131 / KCTC 12085) (Rhodobacter sphaeroides).